An 82-amino-acid polypeptide reads, in one-letter code: RNA-binding protein KhpA (82 aa).

A KH domain is found at 35 to 82; the sequence is STILELRVSQSDVGKIIGRRGRIARAIRTLLGACAAKTNRRVQLEILD.

Belongs to the KhpA RNA-binding protein family. Forms a complex with KhpB.

Its subcellular location is the cytoplasm. In terms of biological role, a probable RNA chaperone. Forms a complex with KhpB which binds to cellular RNA and controls its expression. Plays a role in peptidoglycan (PG) homeostasis and cell length regulation. The chain is RNA-binding protein KhpA from Borreliella burgdorferi (strain ATCC 35210 / DSM 4680 / CIP 102532 / B31) (Borrelia burgdorferi).